The chain runs to 373 residues: Protein-glutamate methylesterase/protein-glutamine glutaminase 1 (373 aa).

One can recognise a Response regulatory domain in the interval 16 to 133; it reads RVVVVDDSAL…ASGLTELSDQ (118 aa). Aspartate 67 carries the post-translational modification 4-aspartylphosphate. The region spanning 175 to 367 is the CheB-type methylesterase domain; that stretch reads RVSTEKLICI…PALIAKLSSA (193 aa). Residues serine 187, histidine 213, and aspartate 309 contribute to the active site.

It belongs to the CheB family. Post-translationally, phosphorylated by CheA. Phosphorylation of the N-terminal regulatory domain activates the methylesterase activity.

The protein localises to the cytoplasm. The catalysed reaction is [protein]-L-glutamate 5-O-methyl ester + H2O = L-glutamyl-[protein] + methanol + H(+). It catalyses the reaction L-glutaminyl-[protein] + H2O = L-glutamyl-[protein] + NH4(+). In terms of biological role, involved in chemotaxis. Part of a chemotaxis signal transduction system that modulates chemotaxis in response to various stimuli. Catalyzes the demethylation of specific methylglutamate residues introduced into the chemoreceptors (methyl-accepting chemotaxis proteins or MCP) by CheR. Also mediates the irreversible deamidation of specific glutamine residues to glutamic acid. The sequence is that of Protein-glutamate methylesterase/protein-glutamine glutaminase 1 from Albidiferax ferrireducens (strain ATCC BAA-621 / DSM 15236 / T118) (Rhodoferax ferrireducens).